The chain runs to 174 residues: Mytilin-3 (174 aa).

The signal sequence occupies residues 1-16 (MLKGIILIVTIQLVNA).

Component of the organic matrix of calcified shell layers like nacre and prisms.

Its subcellular location is the secreted. This Mytilus californianus (California mussel) protein is Mytilin-3.